The primary structure comprises 451 residues: Phosphoglucosamine mutase (451 aa).

The active-site Phosphoserine intermediate is the S101. S101, D240, D242, and D244 together coordinate Mg(2+). At S101 the chain carries Phosphoserine.

It belongs to the phosphohexose mutase family. Mg(2+) is required as a cofactor. In terms of processing, activated by phosphorylation.

The catalysed reaction is alpha-D-glucosamine 1-phosphate = D-glucosamine 6-phosphate. In terms of biological role, catalyzes the conversion of glucosamine-6-phosphate to glucosamine-1-phosphate. The polypeptide is Phosphoglucosamine mutase (Streptococcus pyogenes serotype M2 (strain MGAS10270)).